Consider the following 316-residue polypeptide: tRNA-cytidine(32) 2-sulfurtransferase (316 aa).

The tract at residues 1 to 31 (MGAVIDDSMPGPGADATGTGPSDARTERETR) is disordered. Low complexity predominate over residues 10-21 (PGPGADATGTGP). The PP-loop motif signature appears at 62 to 67 (SGGKDS). Residues cysteine 137, cysteine 140, and cysteine 228 each coordinate [4Fe-4S] cluster.

This sequence belongs to the TtcA family. Homodimer. Mg(2+) is required as a cofactor. [4Fe-4S] cluster serves as cofactor.

It is found in the cytoplasm. It carries out the reaction cytidine(32) in tRNA + S-sulfanyl-L-cysteinyl-[cysteine desulfurase] + AH2 + ATP = 2-thiocytidine(32) in tRNA + L-cysteinyl-[cysteine desulfurase] + A + AMP + diphosphate + H(+). It participates in tRNA modification. Its function is as follows. Catalyzes the ATP-dependent 2-thiolation of cytidine in position 32 of tRNA, to form 2-thiocytidine (s(2)C32). The sulfur atoms are provided by the cysteine/cysteine desulfurase (IscS) system. The polypeptide is tRNA-cytidine(32) 2-sulfurtransferase (Verminephrobacter eiseniae (strain EF01-2)).